The sequence spans 384 residues: Cytochrome b (384 aa).

Transmembrane regions (helical) follow at residues 32-52 (VGSLLGLCLVIQIASGIFLAM), 76-98 (WLIRYIHANGASFFFICMYLHIG), 113-133 (LWVIGVIIFVVTMATAFMGYC), and 179-199 (FFALHFLLPFILAALVCMHLM). 2 residues coordinate heme b: H82 and H96. The heme b site is built by H183 and H197. H202 is a binding site for a ubiquinone. Transmembrane regions (helical) follow at residues 225 to 245 (FIFKDLVTVFVFLLVFSLFVF), 289 to 309 (LGGVIAMFGAILILLTLPYTD), 321 to 341 (LSKFMFFLFLFNFILLGNLGQ), and 348 to 368 (YIELGQYATAFYFAYYLLIVP).

Belongs to the cytochrome b family. Fungal cytochrome b-c1 complex contains 10 subunits; 3 respiratory subunits, 2 core proteins and 5 low-molecular weight proteins. Cytochrome b-c1 complex is a homodimer. Requires heme b as cofactor.

Its subcellular location is the mitochondrion inner membrane. In terms of biological role, component of the ubiquinol-cytochrome c reductase complex (complex III or cytochrome b-c1 complex) that is part of the mitochondrial respiratory chain. The b-c1 complex mediates electron transfer from ubiquinol to cytochrome c. Contributes to the generation of a proton gradient across the mitochondrial membrane that is then used for ATP synthesis. The protein is Cytochrome b (COB) of Candida parapsilosis (Yeast).